The sequence spans 106 residues: uncharacterized protein (106 aa).

Residues 38–106 form a disordered region; it reads KGNKKSKAAT…STHLPYHGSY (69 aa). Composition is skewed to basic and acidic residues over residues 57 to 71 and 82 to 96; these read TRQERDLTDRKHRPE and WKKEVTTRSRPKETS.

Its subcellular location is the mitochondrion. This is an uncharacterized protein from Arabidopsis thaliana (Mouse-ear cress).